The following is a 549-amino-acid chain: Probable protein kinase UbiB (549 aa).

A Protein kinase domain is found at 123–501; the sequence is DFNETPLASA…QQQAHKSNYL (379 aa). ATP-binding positions include 129–137 and K152; that span reads LASASISQV. Residue D287 is the Proton acceptor of the active site. 2 helical membrane passes run 496–516 and 520–540; these read HKSN…TLLI and ATLW…FVGW.

It belongs to the ABC1 family. UbiB subfamily.

It is found in the cell inner membrane. It functions in the pathway cofactor biosynthesis; ubiquinone biosynthesis [regulation]. In terms of biological role, is probably a protein kinase regulator of UbiI activity which is involved in aerobic coenzyme Q (ubiquinone) biosynthesis. This is Probable protein kinase UbiB from Shewanella baltica (strain OS185).